Reading from the N-terminus, the 130-residue chain is Protein ApaG (130 aa).

Positions 3 to 127 (SAVTRGIEVT…FSLDVPEQRR (125 aa)) constitute an ApaG domain.

In Brucella abortus (strain S19), this protein is Protein ApaG.